The chain runs to 239 residues: MNRSTPVFNSQAAHTFKFPGVISHNNQSPTAGMTCDHLIKWPDRASLKGKFCSYLAGVCGSSSVVIQNVNAGNKSLDHSEITFRHLAFFCTIYHLHQSDRTDAHSPLVQVKTFPDTGGFVLYRKNADVGIEHKLQHQNDSLSCIPGCSLLSIKSALTLFPSNHSSHVSPAGVMIRVRPTAITSTRFTFSGNATAFGSLTAWLRLLRNTVVSIICLLMWICLVYIHCGIDAGICQRDIRL.

A helical transmembrane segment spans residues 208 to 228 (TVVSIICLLMWICLVYIHCGI).

The protein resides in the cell inner membrane. The polypeptide is Protein TrbH (trbH) (Escherichia coli (strain K12)).